The primary structure comprises 446 residues: 3-phosphoshikimate 1-carboxyvinyltransferase (446 aa).

Positions 1 to 20 are disordered; sequence MSTWPAPSTATPVHATVTVP. Residues Lys23, Ser24, and Arg28 each contribute to the 3-phosphoshikimate site. Lys23 contributes to the phosphoenolpyruvate binding site. Gly100 and Arg128 together coordinate phosphoenolpyruvate. 6 residues coordinate 3-phosphoshikimate: Ser171, Ser172, Gln173, Ser200, Glu315, and His344. Gln173 serves as a coordination point for phosphoenolpyruvate. Glu315 serves as the catalytic Proton acceptor. Phosphoenolpyruvate is bound by residues Arg348, Arg389, and Lys414.

Belongs to the EPSP synthase family. Monomer.

It localises to the cytoplasm. The catalysed reaction is 3-phosphoshikimate + phosphoenolpyruvate = 5-O-(1-carboxyvinyl)-3-phosphoshikimate + phosphate. It functions in the pathway metabolic intermediate biosynthesis; chorismate biosynthesis; chorismate from D-erythrose 4-phosphate and phosphoenolpyruvate: step 6/7. In terms of biological role, catalyzes the transfer of the enolpyruvyl moiety of phosphoenolpyruvate (PEP) to the 5-hydroxyl of shikimate-3-phosphate (S3P) to produce enolpyruvyl shikimate-3-phosphate and inorganic phosphate. In Mycolicibacterium vanbaalenii (strain DSM 7251 / JCM 13017 / BCRC 16820 / KCTC 9966 / NRRL B-24157 / PYR-1) (Mycobacterium vanbaalenii), this protein is 3-phosphoshikimate 1-carboxyvinyltransferase.